A 390-amino-acid polypeptide reads, in one-letter code: Lissencephaly-1 homolog (390 aa).

A LisH domain is found at 7–39; the sequence is QREEINRAVAEYLQNNGYSEAFNMLLKEASLSE. The stretch at 54–80 forms a coiled coil; the sequence is TTVLRLQRKVNDLEAKLLESQQEINHG. WD repeat units follow at residues 104–145, 146–185, 189–228, 231–270, 272–313, 316–355, and 358–390; these read GHRL…KTLK, GHTD…DCLK, GHEH…CVFT, GHND…RNWY, EIMS…VIFT, AHEN…CMKA, and AHEH…WECR.

It belongs to the WD repeat LIS1/nudF family.

Its subcellular location is the cytoplasm. The protein localises to the cytoskeleton. The protein resides in the microtubule organizing center. It is found in the centrosome. Its function is as follows. Positively regulates the activity of the minus-end directed microtubule motor protein dynein. May enhance dynein-mediated microtubule sliding by targeting dynein to the microtubule plus end. Required for several dynein- and microtubule-dependent processes. The protein is Lissencephaly-1 homolog of Caenorhabditis briggsae.